Consider the following 197-residue polypeptide: Ribosomal RNA large subunit methyltransferase E (197 aa).

Positions 50, 52, 70, 88, and 111 each coordinate S-adenosyl-L-methionine. Lys-151 acts as the Proton acceptor in catalysis.

This sequence belongs to the class I-like SAM-binding methyltransferase superfamily. RNA methyltransferase RlmE family.

The protein resides in the cytoplasm. The catalysed reaction is uridine(2552) in 23S rRNA + S-adenosyl-L-methionine = 2'-O-methyluridine(2552) in 23S rRNA + S-adenosyl-L-homocysteine + H(+). Functionally, specifically methylates the uridine in position 2552 of 23S rRNA at the 2'-O position of the ribose in the fully assembled 50S ribosomal subunit. This chain is Ribosomal RNA large subunit methyltransferase E, found in Syntrophobacter fumaroxidans (strain DSM 10017 / MPOB).